Consider the following 259-residue polypeptide: Imidazole glycerol phosphate synthase subunit HisF (259 aa).

Catalysis depends on residues Asp11 and Asp130.

It belongs to the HisA/HisF family. As to quaternary structure, heterodimer of HisH and HisF.

It is found in the cytoplasm. The catalysed reaction is 5-[(5-phospho-1-deoxy-D-ribulos-1-ylimino)methylamino]-1-(5-phospho-beta-D-ribosyl)imidazole-4-carboxamide + L-glutamine = D-erythro-1-(imidazol-4-yl)glycerol 3-phosphate + 5-amino-1-(5-phospho-beta-D-ribosyl)imidazole-4-carboxamide + L-glutamate + H(+). The protein operates within amino-acid biosynthesis; L-histidine biosynthesis; L-histidine from 5-phospho-alpha-D-ribose 1-diphosphate: step 5/9. IGPS catalyzes the conversion of PRFAR and glutamine to IGP, AICAR and glutamate. The HisF subunit catalyzes the cyclization activity that produces IGP and AICAR from PRFAR using the ammonia provided by the HisH subunit. This is Imidazole glycerol phosphate synthase subunit HisF from Variovorax paradoxus (strain S110).